Here is a 597-residue protein sequence, read N- to C-terminus: MPVRQLPETIVNRIAAGEVVERPASVVKELVENAIDAGASRIDIFSDGGGRRKIVIADDGSGMTRADLALAVDRHATSKLDDEDLLQIRTLGFRGEALPSIGAVARLTITTRHAGEPHAWTLGVEGGDKSPIAPAALSQGTRVEVADLFFATPARLKFLKTDRTEAEAIRDVVRRLAMARPDIAFTLAGEERAPVTWAAALPGAPGQLIRLGDILGADFRANAIEVRSEREGVAVEGFAASPALTRANALGQYLFVNGRPVRDKLILGAVRAAYSDYLPRDRHPVVALFVTLESREVDANVHPAKTEVRFRNAGLVRALIVHALKEGLAREGRRTAANSAGSVISTFRPASMPAANWDWRASPSYPVGGSAIDAPSFAERPQAAFDVGGPSADIRTHEVAPDLLDRPLGAARTQIHETYIVSQTRDGLIVVDQHAAHERIVYERLKASLAANGVQRQILLIPDIVEMDEATVERLVARADELAQFGLVVESFGPGAVAVRETPSLLGKTDAASLLRDLAEHMAEWDEALPLERRLMHVAATMACHGSVRAGRVLKPEEMNALLREMEATPNSGQCNHGRPTYVELTLTDIEKLFGRR.

The protein belongs to the DNA mismatch repair MutL/HexB family.

This protein is involved in the repair of mismatches in DNA. It is required for dam-dependent methyl-directed DNA mismatch repair. May act as a 'molecular matchmaker', a protein that promotes the formation of a stable complex between two or more DNA-binding proteins in an ATP-dependent manner without itself being part of a final effector complex. The chain is DNA mismatch repair protein MutL from Rhodopseudomonas palustris (strain HaA2).